A 350-amino-acid polypeptide reads, in one-letter code: Biotin synthase (350 aa).

Positions 42–269 (NEVQVSTLCS…QSHVRLSAGR (228 aa)) constitute a Radical SAM core domain. [4Fe-4S] cluster contacts are provided by Cys-57, Cys-61, and Cys-64. 4 residues coordinate [2Fe-2S] cluster: Cys-101, Cys-132, Cys-192, and Arg-264.

This sequence belongs to the radical SAM superfamily. Biotin synthase family. Homodimer. [4Fe-4S] cluster is required as a cofactor. Requires [2Fe-2S] cluster as cofactor.

It catalyses the reaction (4R,5S)-dethiobiotin + (sulfur carrier)-SH + 2 reduced [2Fe-2S]-[ferredoxin] + 2 S-adenosyl-L-methionine = (sulfur carrier)-H + biotin + 2 5'-deoxyadenosine + 2 L-methionine + 2 oxidized [2Fe-2S]-[ferredoxin]. It participates in cofactor biosynthesis; biotin biosynthesis; biotin from 7,8-diaminononanoate: step 2/2. In terms of biological role, catalyzes the conversion of dethiobiotin (DTB) to biotin by the insertion of a sulfur atom into dethiobiotin via a radical-based mechanism. The sequence is that of Biotin synthase from Saccharophagus degradans (strain 2-40 / ATCC 43961 / DSM 17024).